Consider the following 258-residue polypeptide: Phosphate import ATP-binding protein PstB (258 aa).

One can recognise an ABC transporter domain in the interval Ile13–Ile253. ATP is bound at residue Gly45–Ser52.

Belongs to the ABC transporter superfamily. Phosphate importer (TC 3.A.1.7) family. The complex is composed of two ATP-binding proteins (PstB), two transmembrane proteins (PstC and PstA) and a solute-binding protein (PstS).

It is found in the cell membrane. It catalyses the reaction phosphate(out) + ATP + H2O = ADP + 2 phosphate(in) + H(+). Part of the ABC transporter complex PstSACB involved in phosphate import. Responsible for energy coupling to the transport system. This is Phosphate import ATP-binding protein PstB from Methanosarcina acetivorans (strain ATCC 35395 / DSM 2834 / JCM 12185 / C2A).